The sequence spans 90 residues: Small ribosomal subunit protein uS19 (90 aa).

The protein belongs to the universal ribosomal protein uS19 family.

Protein S19 forms a complex with S13 that binds strongly to the 16S ribosomal RNA. The chain is Small ribosomal subunit protein uS19 from Nitrosococcus oceani (strain ATCC 19707 / BCRC 17464 / JCM 30415 / NCIMB 11848 / C-107).